Consider the following 240-residue polypeptide: MARRPRRSDSSSAEPTLSPQHLLALVRSTIPPIHPAGRPFIAAGLAVAGVGYRHRWARRTGLLAAGACAGFFRHPPRVPPSRAGAIVAPADGVICVIDTAAPPAELSMGDAPLPRVSIFLSVFDAHVQRAPVSGEVVAVQHRPGRFGSADLPAASNDNERNSVRIRTANGAEVVAVQVAGLVARRIVCDAHVGDKLAIGDTYGLIRFGSRLDTYLPPGTEPVVIVGQRTIAGETILADLP.

Serine 209 acts as the Schiff-base intermediate with substrate; via pyruvic acid in catalysis. Serine 209 is subject to Pyruvic acid (Ser); by autocatalysis.

The protein belongs to the phosphatidylserine decarboxylase family. PSD-A subfamily. In terms of assembly, heterodimer of a large membrane-associated beta subunit and a small pyruvoyl-containing alpha subunit. Pyruvate is required as a cofactor. Post-translationally, is synthesized initially as an inactive proenzyme. Formation of the active enzyme involves a self-maturation process in which the active site pyruvoyl group is generated from an internal serine residue via an autocatalytic post-translational modification. Two non-identical subunits are generated from the proenzyme in this reaction, and the pyruvate is formed at the N-terminus of the alpha chain, which is derived from the carboxyl end of the proenzyme. The post-translation cleavage follows an unusual pathway, termed non-hydrolytic serinolysis, in which the side chain hydroxyl group of the serine supplies its oxygen atom to form the C-terminus of the beta chain, while the remainder of the serine residue undergoes an oxidative deamination to produce ammonia and the pyruvoyl prosthetic group on the alpha chain.

The protein localises to the cell membrane. It catalyses the reaction a 1,2-diacyl-sn-glycero-3-phospho-L-serine + H(+) = a 1,2-diacyl-sn-glycero-3-phosphoethanolamine + CO2. It functions in the pathway phospholipid metabolism; phosphatidylethanolamine biosynthesis; phosphatidylethanolamine from CDP-diacylglycerol: step 2/2. In terms of biological role, catalyzes the formation of phosphatidylethanolamine (PtdEtn) from phosphatidylserine (PtdSer). In Mycobacterium ulcerans (strain Agy99), this protein is Phosphatidylserine decarboxylase proenzyme.